The sequence spans 193 residues: Der GTPase-activating protein YihI (193 aa).

Basic residues predominate over residues 1–12 (MSAKQPNRKPTG). Disordered regions lie at residues 1-91 (MSAK…KLVM) and 143-193 (IIDN…PKKK). The span at 13-26 (KRKESDASALDGRE) shows a compositional bias: basic and acidic residues. Residues 27 to 36 (RKRAAKRKGL) show a composition bias toward basic residues. A compositionally biased stretch (polar residues) spans 40–54 (SRQQAEQSSKNNNGK). Residues 145-160 (DNDDDEEDDGSFDDAS) show a composition bias toward acidic residues. Basic and acidic residues predominate over residues 184-193 (PEPKPEPKKK).

The protein belongs to the YihI family. As to quaternary structure, interacts with Der.

Its function is as follows. A GTPase-activating protein (GAP) that modifies Der/EngA GTPase function. May play a role in ribosome biogenesis. The sequence is that of Der GTPase-activating protein YihI from Aeromonas salmonicida (strain A449).